A 620-amino-acid chain; its full sequence is Chaperone protein DnaK (620 aa).

The disordered stretch occupies residues 579-620 (KAQKEASAGAEASEDASGPSSTGSASDDDVVDADYEVVDEDK). Residues 583 to 603 (EASAGAEASEDASGPSSTGSA) are compositionally biased toward low complexity. Residues 604 to 620 (SDDDVVDADYEVVDEDK) are compositionally biased toward acidic residues.

The protein belongs to the heat shock protein 70 family.

Acts as a chaperone. The chain is Chaperone protein DnaK from Methanococcoides burtonii (strain DSM 6242 / NBRC 107633 / OCM 468 / ACE-M).